The following is a 118-amino-acid chain: Actin depolymerizing factor ADF (118 aa).

Residues 4–118 form the ADF-H domain; the sequence is GMGVDENCVA…HEMGDLAPLA (115 aa).

The protein belongs to the actin-binding proteins ADF family. Interacts with ACT1 (G-actin); the interaction results in inhibition of actin polymerization. Interacts with DPA; the interaction enhances ADF activity in disassembly of filamentous actin and inhibition of actin polymerization.

The protein resides in the cytoplasm. Functionally, inhibits actin polymerization. Promotes actin depolymerization. Strongly sequesters actin monomers (G-actin). Weakly severs actin filaments (F-actin). The chain is Actin depolymerizing factor ADF from Toxoplasma gondii.